A 152-amino-acid polypeptide reads, in one-letter code: Deoxyuridine 5'-triphosphate nucleotidohydrolase (152 aa).

Substrate is bound by residues 71-73, Asn84, 88-90, and Met98; these read RSG and LID.

The protein belongs to the dUTPase family. The cofactor is Mg(2+).

It catalyses the reaction dUTP + H2O = dUMP + diphosphate + H(+). Its pathway is pyrimidine metabolism; dUMP biosynthesis; dUMP from dCTP (dUTP route): step 2/2. This enzyme is involved in nucleotide metabolism: it produces dUMP, the immediate precursor of thymidine nucleotides and it decreases the intracellular concentration of dUTP so that uracil cannot be incorporated into DNA. The protein is Deoxyuridine 5'-triphosphate nucleotidohydrolase of Shewanella sp. (strain MR-7).